We begin with the raw amino-acid sequence, 303 residues long: ATP phosphoribosyltransferase (303 aa).

This sequence belongs to the ATP phosphoribosyltransferase family. Long subfamily. Requires Mg(2+) as cofactor.

The protein localises to the cytoplasm. The enzyme catalyses 1-(5-phospho-beta-D-ribosyl)-ATP + diphosphate = 5-phospho-alpha-D-ribose 1-diphosphate + ATP. It participates in amino-acid biosynthesis; L-histidine biosynthesis; L-histidine from 5-phospho-alpha-D-ribose 1-diphosphate: step 1/9. With respect to regulation, feedback inhibited by histidine. Its function is as follows. Catalyzes the condensation of ATP and 5-phosphoribose 1-diphosphate to form N'-(5'-phosphoribosyl)-ATP (PR-ATP). Has a crucial role in the pathway because the rate of histidine biosynthesis seems to be controlled primarily by regulation of HisG enzymatic activity. The chain is ATP phosphoribosyltransferase from Haemophilus influenzae (strain PittEE).